Here is a 245-residue protein sequence, read N- to C-terminus: Carbohydrate deacetylase (245 aa).

Residues H61 and H122 each contribute to the Mg(2+) site.

This sequence belongs to the YdjC deacetylase family. Mg(2+) serves as cofactor.

In terms of biological role, probably catalyzes the deacetylation of acetylated carbohydrates an important step in the degradation of oligosaccharides. In Geobacillus stearothermophilus (Bacillus stearothermophilus), this protein is Carbohydrate deacetylase (celC).